A 104-amino-acid chain; its full sequence is Protein KleF (104 aa).

In Escherichia coli, this protein is Protein KleF (kleF).